Consider the following 101-residue polypeptide: Small ribosomal subunit protein uS10 (101 aa).

This sequence belongs to the universal ribosomal protein uS10 family. Part of the 30S ribosomal subunit.

Involved in the binding of tRNA to the ribosomes. The protein is Small ribosomal subunit protein uS10 of Mycoplasmopsis synoviae (strain 53) (Mycoplasma synoviae).